The chain runs to 232 residues: Phosphoglycolate phosphatase (232 aa).

Catalysis depends on Asp8, which acts as the Nucleophile. 2 residues coordinate Mg(2+): Asp8 and Asp10. Lys155 lines the substrate pocket. Mg(2+) is bound by residues Asp178 and Asp182.

The protein belongs to the archaeal SPP-like hydrolase family. The cofactor is Mg(2+).

The enzyme catalyses 2-phosphoglycolate + H2O = glycolate + phosphate. In terms of biological role, catalyzes the dephosphorylation of 2-phosphoglycolate. The sequence is that of Phosphoglycolate phosphatase from Methanospirillum hungatei JF-1 (strain ATCC 27890 / DSM 864 / NBRC 100397 / JF-1).